The following is a 467-amino-acid chain: Argininosuccinate lyase (467 aa).

This sequence belongs to the lyase 1 family. Argininosuccinate lyase subfamily.

The protein localises to the cytoplasm. It catalyses the reaction 2-(N(omega)-L-arginino)succinate = fumarate + L-arginine. It functions in the pathway amino-acid biosynthesis; L-arginine biosynthesis; L-arginine from L-ornithine and carbamoyl phosphate: step 3/3. This chain is Argininosuccinate lyase, found in Thioalkalivibrio sulfidiphilus (strain HL-EbGR7).